A 119-amino-acid chain; its full sequence is Flagellar transcriptional regulator FlhD (119 aa).

Belongs to the FlhD family. In terms of assembly, homodimer; disulfide-linked. Forms a heterohexamer composed of two FlhC and four FlhD subunits. Each FlhC binds a FlhD dimer, forming a heterotrimer, and a hexamer assembles by dimerization of two heterotrimers.

It localises to the cytoplasm. In terms of biological role, functions in complex with FlhC as a master transcriptional regulator that regulates transcription of several flagellar and non-flagellar operons by binding to their promoter region. Activates expression of class 2 flagellar genes, including fliA, which is a flagellum-specific sigma factor that turns on the class 3 genes. Also regulates genes whose products function in a variety of physiological pathways. The polypeptide is Flagellar transcriptional regulator FlhD (Shigella dysenteriae serotype 1 (strain Sd197)).